The following is a 74-amino-acid chain: Antimicrobial peptide HsAp2 (74 aa).

The first 21 residues, 1–21, serve as a signal peptide directing secretion; that stretch reads MSRRLILILVLVAMLVKTMAG. Positions 22 to 33 are excised as a propeptide; sequence MESKWVETTYEI. The residue at position 65 (P65) is a Proline amide. Positions 69–74 are excised as a propeptide; that stretch reads AISEQT.

The protein belongs to the non-disulfide-bridged peptide (NDBP) superfamily. Medium-length antimicrobial peptide (group 3) family. As to expression, expressed by the venom gland.

The protein resides in the secreted. Its subcellular location is the target cell membrane. In terms of biological role, possesses antimicrobial activity against both Gram-negative and Gram-positive bacteria, as well as against the fungus C.tropicalis. Also possesses a relatively high hemolytic activity. May act by disrupting the integrity of the bacterial cell membrane. The protein is Antimicrobial peptide HsAp2 of Heterometrus spinifer (Asia giant forest scorpion).